The primary structure comprises 269 residues: Hydroxyacylglutathione hydrolase (269 aa).

The Zn(2+) site is built by His-56, His-58, Asp-60, His-61, His-115, Asp-137, and His-177.

The protein belongs to the metallo-beta-lactamase superfamily. Glyoxalase II family. As to quaternary structure, monomer. Requires Zn(2+) as cofactor.

It carries out the reaction an S-(2-hydroxyacyl)glutathione + H2O = a 2-hydroxy carboxylate + glutathione + H(+). Its pathway is secondary metabolite metabolism; methylglyoxal degradation; (R)-lactate from methylglyoxal: step 2/2. Its function is as follows. Thiolesterase that catalyzes the hydrolysis of S-D-lactoyl-glutathione to form glutathione and D-lactic acid. In Leptospira borgpetersenii serovar Hardjo-bovis (strain JB197), this protein is Hydroxyacylglutathione hydrolase.